A 70-amino-acid chain; its full sequence is Translational regulator CsrA (70 aa).

This sequence belongs to the CsrA/RsmA family. Homodimer; the beta-strands of each monomer intercalate to form a hydrophobic core, while the alpha-helices form wings that extend away from the core.

The protein localises to the cytoplasm. In terms of biological role, a key translational regulator that binds mRNA to regulate translation initiation and/or mRNA stability. Mediates global changes in gene expression, shifting from rapid growth to stress survival by linking envelope stress, the stringent response and the catabolite repression systems. Usually binds in the 5'-UTR; binding at or near the Shine-Dalgarno sequence prevents ribosome-binding, repressing translation, binding elsewhere in the 5'-UTR can activate translation and/or stabilize the mRNA. Its function is antagonized by small RNA(s). The protein is Translational regulator CsrA of Hydrogenovibrio crunogenus (strain DSM 25203 / XCL-2) (Thiomicrospira crunogena).